Here is a 240-residue protein sequence, read N- to C-terminus: MNPEEFILELSKHNFELSDKQKQQFKLYFKYLIEVNEHVNLTRITEENEVYLKHFFDSVTPLFTFGEVFKDGATLCDVGAGAGFPSIPLKILNPTLKVTIVDSLAKRLTFLKNLIEKLGLTDVELVHGRAEDVGQNKLYREKFDLVTARAVARMSVLSEYCLPLVKKGGYFIALKGPKAEDELDDGQKALEVLGGKLVKEEELTLPHSKEERTLILVKKIKQTPKKYPRQAGTPRRKPIH.

S-adenosyl-L-methionine contacts are provided by residues Gly-79, Phe-84, 130–131, and Arg-149; that span reads AE.

Belongs to the methyltransferase superfamily. RNA methyltransferase RsmG family.

It is found in the cytoplasm. Functionally, specifically methylates the N7 position of a guanine in 16S rRNA. The polypeptide is Ribosomal RNA small subunit methyltransferase G (Lactobacillus acidophilus (strain ATCC 700396 / NCK56 / N2 / NCFM)).